The chain runs to 577 residues: Arginine--tRNA ligase (577 aa).

Positions Pro-122–His-132 match the 'HIGH' region motif.

This sequence belongs to the class-I aminoacyl-tRNA synthetase family. As to quaternary structure, monomer.

It localises to the cytoplasm. The catalysed reaction is tRNA(Arg) + L-arginine + ATP = L-arginyl-tRNA(Arg) + AMP + diphosphate. The chain is Arginine--tRNA ligase from Escherichia coli O6:K15:H31 (strain 536 / UPEC).